Here is a 237-residue protein sequence, read N- to C-terminus: Ribonuclease PH (237 aa).

Phosphate-binding positions include Arg-86 and 124 to 126 (GTR).

Belongs to the RNase PH family. As to quaternary structure, homohexameric ring arranged as a trimer of dimers.

It catalyses the reaction tRNA(n+1) + phosphate = tRNA(n) + a ribonucleoside 5'-diphosphate. Its function is as follows. Phosphorolytic 3'-5' exoribonuclease that plays an important role in tRNA 3'-end maturation. Removes nucleotide residues following the 3'-CCA terminus of tRNAs; can also add nucleotides to the ends of RNA molecules by using nucleoside diphosphates as substrates, but this may not be physiologically important. Probably plays a role in initiation of 16S rRNA degradation (leading to ribosome degradation) during starvation. In Myxococcus xanthus (strain DK1622), this protein is Ribonuclease PH.